Consider the following 394-residue polypeptide: Chorismate synthase (394 aa).

The NADP(+) site is built by R40 and R46. Residues 135-137 (RAS), 255-256 (QA), G302, 317-321 (KPISS), and R343 contribute to the FMN site.

Belongs to the chorismate synthase family. Homotetramer. FMNH2 is required as a cofactor.

It catalyses the reaction 5-O-(1-carboxyvinyl)-3-phosphoshikimate = chorismate + phosphate. It functions in the pathway metabolic intermediate biosynthesis; chorismate biosynthesis; chorismate from D-erythrose 4-phosphate and phosphoenolpyruvate: step 7/7. Catalyzes the anti-1,4-elimination of the C-3 phosphate and the C-6 proR hydrogen from 5-enolpyruvylshikimate-3-phosphate (EPSP) to yield chorismate, which is the branch point compound that serves as the starting substrate for the three terminal pathways of aromatic amino acid biosynthesis. This reaction introduces a second double bond into the aromatic ring system. This chain is Chorismate synthase, found in Parafrankia sp. (strain EAN1pec).